Here is a 366-residue protein sequence, read N- to C-terminus: Variable large protein 10 (366 aa).

Positions 1-18 (MRKRISAIIMTLFMVLAS) are cleaved as a signal peptide. The N-palmitoyl cysteine moiety is linked to residue Cys19. Cys19 carries S-diacylglycerol cysteine lipidation.

The protein belongs to the variable large protein (Vlp) family. Beta subfamily.

Its subcellular location is the cell outer membrane. The Vlp and Vsp proteins are antigenically distinct proteins, only one vlp or vsp gene is transcriptionally active at any one time. Switching between these genes is a mechanism of host immune response evasion. This is Variable large protein 10 from Borrelia hermsii.